The sequence spans 344 residues: Phosphoribosylformylglycinamidine cyclo-ligase (344 aa).

It belongs to the AIR synthase family.

The protein localises to the cytoplasm. It carries out the reaction 2-formamido-N(1)-(5-O-phospho-beta-D-ribosyl)acetamidine + ATP = 5-amino-1-(5-phospho-beta-D-ribosyl)imidazole + ADP + phosphate + H(+). It functions in the pathway purine metabolism; IMP biosynthesis via de novo pathway; 5-amino-1-(5-phospho-D-ribosyl)imidazole from N(2)-formyl-N(1)-(5-phospho-D-ribosyl)glycinamide: step 2/2. The sequence is that of Phosphoribosylformylglycinamidine cyclo-ligase from Leptospira interrogans serogroup Icterohaemorrhagiae serovar Lai (strain 56601).